The chain runs to 538 residues: Chaperonin GroEL (538 aa).

ATP is bound by residues 29-32 (TIGP), 86-90 (DGTTT), Gly413, 476-478 (NAA), and Asp492.

This sequence belongs to the chaperonin (HSP60) family. In terms of assembly, forms a cylinder of 14 subunits composed of two heptameric rings stacked back-to-back. Interacts with the co-chaperonin GroES.

It localises to the cytoplasm. It carries out the reaction ATP + H2O + a folded polypeptide = ADP + phosphate + an unfolded polypeptide.. Its function is as follows. Together with its co-chaperonin GroES, plays an essential role in assisting protein folding. The GroEL-GroES system forms a nano-cage that allows encapsulation of the non-native substrate proteins and provides a physical environment optimized to promote and accelerate protein folding. The chain is Chaperonin GroEL from Staphylococcus aureus (strain NCTC 8325 / PS 47).